A 245-amino-acid chain; its full sequence is 4-hydroxy-tetrahydrodipicolinate reductase (245 aa).

NAD(+) contacts are provided by residues 7–12 (GARGKV), 75–77 (GTT), and 102–105 (APNF). Catalysis depends on histidine 132, which acts as the Proton donor/acceptor. Histidine 133 provides a ligand contact to (S)-2,3,4,5-tetrahydrodipicolinate. The Proton donor role is filled by lysine 136. 142-143 (GT) lines the (S)-2,3,4,5-tetrahydrodipicolinate pocket.

It belongs to the DapB family.

It is found in the cytoplasm. It carries out the reaction (S)-2,3,4,5-tetrahydrodipicolinate + NAD(+) + H2O = (2S,4S)-4-hydroxy-2,3,4,5-tetrahydrodipicolinate + NADH + H(+). The enzyme catalyses (S)-2,3,4,5-tetrahydrodipicolinate + NADP(+) + H2O = (2S,4S)-4-hydroxy-2,3,4,5-tetrahydrodipicolinate + NADPH + H(+). It functions in the pathway amino-acid biosynthesis; L-lysine biosynthesis via DAP pathway; (S)-tetrahydrodipicolinate from L-aspartate: step 4/4. Functionally, catalyzes the conversion of 4-hydroxy-tetrahydrodipicolinate (HTPA) to tetrahydrodipicolinate. This is 4-hydroxy-tetrahydrodipicolinate reductase from Mycolicibacterium vanbaalenii (strain DSM 7251 / JCM 13017 / BCRC 16820 / KCTC 9966 / NRRL B-24157 / PYR-1) (Mycobacterium vanbaalenii).